The chain runs to 99 residues: HTH-type transcriptional regulator YgaV (99 aa).

The HTH arsR-type domain maps to 7–99; sequence LQASAEQAAA…IATLKNVYCP (93 aa). Residues 41 to 64 constitute a DNA-binding region (H-T-H motif); the sequence is AGELTRITGLSASATSQHLARMRD.

With respect to regulation, in the presence of H(2)S, two cysteine residues form an intramolecular tetrasulfide bond, which attenuates the binding of YgaV to DNA. Both unmodified YgaV and sulfide-modified YgaV can probably function as either a repressor or an activator. Binds heme, which may influence the DNA-binding affinity. Functionally, transcriptional regulator that regulates large-scale gene expression in response to sulfide. May act as a global regulator responsible for redox homeostasis. It functions as both a repressor and an activator. In the absence of sulfide compounds, it negatively regulates many anaerobic respiratory genes, including formate, fumarate, lactate, nitrate and nitrite reductase genes. In the presence of hydrogen sulfide (H(2)S), YgaV activity is attenuated, leading to the expression of anaerobic respiratory and ROS scavenging genes, which contributes to redox homeostasis, reactive oxygen species (ROS) scavenging and antibiotic tolerance. It responds to H(2)O(2) scavenging and increases antibiotic tolerance under H(2)S-atmospheric conditions. It also negatively regulates its own expression by binding to the ygaVP promoter region. May also be involved in regulatory mechanisms that operate independently of sulfide. This Escherichia coli (strain K12) protein is HTH-type transcriptional regulator YgaV (ygaV).